The following is a 274-amino-acid chain: NH(3)-dependent NAD(+) synthetase (274 aa).

46 to 53 (GISGGQDS) provides a ligand contact to ATP. Aspartate 52 is a binding site for Mg(2+). Deamido-NAD(+) is bound at residue arginine 140. An ATP-binding site is contributed by threonine 160. Glutamate 165 is a binding site for Mg(2+). Deamido-NAD(+) is bound by residues lysine 173 and aspartate 180. Positions 189 and 211 each coordinate ATP. 260–261 (HK) provides a ligand contact to deamido-NAD(+).

Belongs to the NAD synthetase family. Homodimer.

It carries out the reaction deamido-NAD(+) + NH4(+) + ATP = AMP + diphosphate + NAD(+) + H(+). It functions in the pathway cofactor biosynthesis; NAD(+) biosynthesis; NAD(+) from deamido-NAD(+) (ammonia route): step 1/1. Functionally, catalyzes the ATP-dependent amidation of deamido-NAD to form NAD. Uses ammonia as a nitrogen source. This Lysinibacillus sphaericus (strain C3-41) protein is NH(3)-dependent NAD(+) synthetase.